Reading from the N-terminus, the 1363-residue chain is Spike glycoprotein (1363 aa).

An N-terminal signal peptide occupies residues 1–13 (MFLILLISLPMAL). At 14–1307 (AVIGDLKCTT…GTYEYYVKWP (1294 aa)) the chain is on the extracellular side. In terms of domain architecture, BetaCoV S1-NTD spans 15–298 (VIGDLKCTTV…DFMSEIKCKT (284 aa)). 5 disulfides stabilise this stretch: Cys21–Cys165, Cys160–Cys193, Cys172–Cys252, Cys286–Cys296, and Cys331–Cys356. Residues Asn59 and Asn133 are each glycosylated (N-linked (GlcNAc...) asparagine; by host). Residue Asn198 is glycosylated (N-linked (GlcNAc...) asparagine; by host). The BetaCoV S1-CTD domain maps to 329 to 617 (PDCNIEAWLN…DVNSGTTCST (289 aa)). Asn359 carries N-linked (GlcNAc...) asparagine; by host glycosylation. Cystine bridges form between Cys374–Cys427 and Cys386–Cys615. Residues Asn437, Asn649, Asn676, Asn696, Asn714, Asn739, and Asn788 are each glycosylated (N-linked (GlcNAc...) asparagine; by host). Fusion peptide stretches follow at residues 914 to 935 (SAIEDLLFSKVKLSDVGFVEAY) and 933 to 953 (EAYNNCTGGAEIRDLICVQSY). Asn937 carries N-linked (GlcNAc...) asparagine; by host glycosylation. An intrachain disulfide couples Cys938 to Cys949. Residues 1014–1064 (QKLIANAFNNALDAIQEGFDATNSALVKIQAVVNANAEALNNLLQQLSNRF) are heptad repeat 1. Residues 1043–1087 (QAVVNANAEALNNLLQQLSNRFGAISSSLQEILSRLDALEAQAQI) adopt a coiled-coil conformation. N-linked (GlcNAc...) asparagine; by host glycans are attached at residues Asn1194, Asn1224, Asn1234, Asn1253, Asn1267, and Asn1288. Residues 1258–1296 (APDLSLDYINVTFLDLQDEMNRLQEAIKVLNQSYINLKD) are heptad repeat 2. Positions 1269–1297 (TFLDLQDEMNRLQEAIKVLNQSYINLKDI) form a coiled coil. The chain crosses the membrane as a helical span at residues 1308–1328 (WYVWLLIGLAGVAMLVLLFFI). At 1329 to 1363 (CCCTGCGTSCFKKCGGCCDDYTGHQELVIKTSHDD) the chain is on the cytoplasmic side. The KxHxx motif lies at 1359–1363 (TSHDD).

The protein belongs to the betacoronaviruses spike protein family. In terms of assembly, homotrimer; each monomer consists of a S1 and a S2 subunit. The resulting peplomers protrude from the virus surface as spikes. Post-translationally, specific enzymatic cleavages in vivo yield mature proteins. The precursor is processed into S1 and S2 by host cell furin or another cellular protease to yield the mature S1 and S2 proteins. Additionally, a second cleavage leads to the release of a fusion peptide after viral attachment to host cell receptor. In terms of processing, the cytoplasmic Cys-rich domain is palmitoylated. Spike glycoprotein is digested within host endosomes.

It is found in the virion membrane. It localises to the host endoplasmic reticulum-Golgi intermediate compartment membrane. Its subcellular location is the host cell membrane. In terms of biological role, attaches the virion to the cell membrane by interacting with host receptor, initiating the infection. Functionally, mediates fusion of the virion and cellular membranes by acting as a class I viral fusion protein. Under the current model, the protein has at least three conformational states: pre-fusion native state, pre-hairpin intermediate state, and post-fusion hairpin state. During viral and target cell membrane fusion, the coiled coil regions (heptad repeats) assume a trimer-of-hairpins structure, positioning the fusion peptide in close proximity to the C-terminal region of the ectodomain. The formation of this structure appears to drive apposition and subsequent fusion of viral and target cell membranes. Its function is as follows. Acts as a viral fusion peptide which is unmasked following S2 cleavage occurring upon virus endocytosis. In Bos taurus (Bovine), this protein is Spike glycoprotein.